We begin with the raw amino-acid sequence, 316 residues long: ATP synthase gamma chain (316 aa).

This sequence belongs to the ATPase gamma chain family. As to quaternary structure, F-type ATPases have 2 components, CF(1) - the catalytic core - and CF(0) - the membrane proton channel. CF(1) has five subunits: alpha(3), beta(3), gamma(1), delta(1), epsilon(1). CF(0) has three main subunits: a, b and c.

Its subcellular location is the cellular thylakoid membrane. Produces ATP from ADP in the presence of a proton gradient across the membrane. The gamma chain is believed to be important in regulating ATPase activity and the flow of protons through the CF(0) complex. In Prochlorococcus marinus (strain MIT 9301), this protein is ATP synthase gamma chain.